The sequence spans 313 residues: MSKMTPQEMAAKIGSGLLSFPVTPFKADYSFDEATYRANMDWLCGYEVAGLFAAGGTGEFFSLTPAEVPEVVRVAVDETRGRVPVLAGTGYGTAIAREIAIGAEKAGADGLLLLPPYLTHAEQDGLAAHVEAVCKSVKIGVIVYNRDNAILQPDTLARLCERCPNLVGYKDGIGDIELMTRVYSKMGDRLTYIGGLPTAETFALPYLDMGVTTYSSAVFNFVPEFATNFYAAVRKRDHATIHAGLKDFILPLIAIRNRKKGYAVSIIKAGMKVIGRDSGPVRLPLTDLTETEMAELTALVKALPAAAVSQAAE.

This sequence belongs to the DapA family.

The catalysed reaction is 5-dehydro-4-deoxy-D-glucarate + H(+) = 2,5-dioxopentanoate + CO2 + H2O. The protein operates within carbohydrate acid metabolism; D-glucarate degradation; 2,5-dioxopentanoate from D-glucarate: step 2/2. This Bradyrhizobium sp. (strain BTAi1 / ATCC BAA-1182) protein is Probable 5-dehydro-4-deoxyglucarate dehydratase.